Here is a 226-residue protein sequence, read N- to C-terminus: ATP synthase subunit a (226 aa).

A run of 6 helical transmembrane segments spans residues 18–38 (FITG…SLGA), 79–99 (LAGT…IPGF), 105–125 (SWSF…FEGI), 134–154 (FAHF…IEII), 179–199 (LIML…VLFF), and 201–221 (GILQ…GAVL).

The protein belongs to the ATPase A chain family. F-type ATPases have 2 components, CF(1) - the catalytic core - and CF(0) - the membrane proton channel. CF(1) has five subunits: alpha(3), beta(3), gamma(1), delta(1), epsilon(1). CF(0) has three main subunits: a(1), b(2) and c(9-12). The alpha and beta chains form an alternating ring which encloses part of the gamma chain. CF(1) is attached to CF(0) by a central stalk formed by the gamma and epsilon chains, while a peripheral stalk is formed by the delta and b chains.

Its subcellular location is the cell inner membrane. Key component of the proton channel; it plays a direct role in the translocation of protons across the membrane. The sequence is that of ATP synthase subunit a from Helicobacter pylori (strain HPAG1).